The sequence spans 358 residues: 3'(2'),5'-bisphosphate nucleotidase (358 aa).

The active-site Proton acceptor is the Asp52. Mg(2+) is bound by residues Glu78, Asp140, Ile142, and Asp143. The active-site Proton acceptor is the Thr145. Adenosine 3',5'-bisphosphate contacts are provided by Thr145, His239, Ser263, Lys266, Arg280, and Asp292. Residues His239, Ser263, Lys266, Arg280, and Asp292 each contribute to the AMP site. Asp292 contacts Mg(2+).

This sequence belongs to the inositol monophosphatase superfamily. Requires Mg(2+) as cofactor. As to expression, is constitutively transcribed in both roots and shoots.

The enzyme catalyses 3'-phosphoadenylyl sulfate + H2O = adenosine 5'-phosphosulfate + phosphate. The catalysed reaction is adenosine 3',5'-bisphosphate + H2O = AMP + phosphate. It catalyses the reaction adenosine 2',5'-bisphosphate + H2O = AMP + phosphate. Inhibited by Ca(2+), Li(+), and Na(+) and activated by K(+). Phosphatase that converts adenosine 3'-phosphate 5'-phosphosulfate (PAPS) to adenosine 5'-phosphosulfate (APS) and 3'(2')-phosphoadenosine 5'-phosphate (PAP) to AMP. May regulate the flux of sulfur in the sulfur-activation pathway by converting PAPS to APS. Shows no activity on myo-inositol 1-phosphate, beta-glycerol phosphate, NADPH, NADP and 5'-AMP. This Oryza sativa (Rice) protein is 3'(2'),5'-bisphosphate nucleotidase.